The chain runs to 284 residues: Bifunctional protein FolD (284 aa).

Residues 163 to 165, I188, and I229 each bind NADP(+); that span reads GAS.

Belongs to the tetrahydrofolate dehydrogenase/cyclohydrolase family. As to quaternary structure, homodimer.

The catalysed reaction is (6R)-5,10-methylene-5,6,7,8-tetrahydrofolate + NADP(+) = (6R)-5,10-methenyltetrahydrofolate + NADPH. It catalyses the reaction (6R)-5,10-methenyltetrahydrofolate + H2O = (6R)-10-formyltetrahydrofolate + H(+). It participates in one-carbon metabolism; tetrahydrofolate interconversion. Functionally, catalyzes the oxidation of 5,10-methylenetetrahydrofolate to 5,10-methenyltetrahydrofolate and then the hydrolysis of 5,10-methenyltetrahydrofolate to 10-formyltetrahydrofolate. The protein is Bifunctional protein FolD of Nautilia profundicola (strain ATCC BAA-1463 / DSM 18972 / AmH).